Here is a 231-residue protein sequence, read N- to C-terminus: NADH-ubiquinone oxidoreductase chain 4 (231 aa).

A run of 7 helical transmembrane segments spans residues proline 1–isoleucine 21, valine 34–leucine 54, isoleucine 63–glycine 85, alanine 89–tyrosine 111, methionine 128–proline 148, threonine 169–leucine 189, and leucine 211–threonine 231.

The protein belongs to the complex I subunit 4 family.

The protein localises to the mitochondrion membrane. It catalyses the reaction a ubiquinone + NADH + 5 H(+)(in) = a ubiquinol + NAD(+) + 4 H(+)(out). In terms of biological role, core subunit of the mitochondrial membrane respiratory chain NADH dehydrogenase (Complex I) that is believed to belong to the minimal assembly required for catalysis. Complex I functions in the transfer of electrons from NADH to the respiratory chain. The immediate electron acceptor for the enzyme is believed to be ubiquinone. This chain is NADH-ubiquinone oxidoreductase chain 4 (MT-ND4), found in Sistrurus miliarius (Pigmy rattlesnake).